Reading from the N-terminus, the 336-residue chain is Aromatic prenyltransferase (336 aa).

It belongs to the aromatic prenyltransferase family.

In terms of biological role, prenyltransferase that attaches isoprenoid moieties to carbon atoms of aromatic substrates in an enzyme-catalyzed Friedel-Crafts reaction. Shows specificity for dimethylallyl diphosphate (DMAPP) and does not accept geranyl diphosphate (GPP) or isopentenyl diphosphate (IPP). Prenylates the artificial substrate 2,7-dihydroxynaphthalene (2,7-DHN), as well as dihydrophenazine-1-carboxylic acid at a lower level. Only traces of products are detected with aspulvinone E, flaviolin, or 4-hydroxybenzoic acid as substrates; and no product is formed with L-tryptophan, L-tyrosine, or 4-hydroxyphenylpyruvate. Ptf seems no to be involved in the prenylation reaction in the biosynthesis of aspulvinone H and J and the physiological function of ptf remains unknown. The polypeptide is Aromatic prenyltransferase (Aspergillus terreus (strain NIH 2624 / FGSC A1156)).